The primary structure comprises 166 residues: Regulatory protein RecX (166 aa).

This sequence belongs to the RecX family.

The protein localises to the cytoplasm. In terms of biological role, modulates RecA activity. The sequence is that of Regulatory protein RecX from Salmonella newport (strain SL254).